The chain runs to 780 residues: Carboxysome assembly protein CsoS2 (780 aa).

Basic and acidic residues predominate over residues M1–K15. Disordered stretches follow at residues M1–E173, K189–L212, T226–V281, N330–G349, and S382–T444. The N-repeat 1 repeat unit spans residues S5–S24. Over residues A48–S78 the composition is skewed to low complexity. The N-repeat 2 repeat unit spans residues P86 to A105. Residues P86–V116 are compositionally biased toward basic and acidic residues. Low complexity predominate over residues A117 to A130. 2 N-repeat repeats span residues P175–A194 and T213–S235. M-repeat repeat units follow at residues K260–C309, K320–C369, K378–Y417, K431–C480, K490–A535, and T541–C599. The interval K260–D608 is middle region. The segment covering S264 to Q276 has biased composition (low complexity). Low complexity-rich tracts occupy residues G387–G403 and V432–T444. The tract at residues S609–N749 is C-terminal domain. C-repeat repeat units lie at residues S623–F669 and E693–S726. Disordered stretches follow at residues A631–G661 and A686–G780. Positions V641 to R651 are enriched in polar residues. Residues T709–T720 show a composition bias toward basic and acidic residues. Positions E750 to G780 are C-terminal peptide. Positions V759–K768 are enriched in polar residues.

The protein belongs to the CsoS2 family. As to quaternary structure, interacts via its N-terminal repeats with RuBisCO. Interacts with the major shell protein CsoS1. In terms of processing, unlike H.neapolitanus and predictions for P.marinus strain MIT 9313, this protein is not thought to have ribosomal frameshifting.

In terms of biological role, required for alpha-carboxysome (Cb) assembly, mediates interaction between RuBisCO and the carboxysome shell. The protein is probably intrinsically disordered. The C-terminal repeats act as the encapsulation signal to target proteins to the Cb; they are necessary and sufficient to target both CsoS2 and foreign proteins to the Cb. The N-terminal repeats of this protein bind simultaneously to both subunits of RuBisCO. Probably also interacts with the major shell proteins (CsoS1); that interaction would increase the local concentration of CsoS2 so that it can condense RuBisCO and full carboxysomes can be formed. This chain is Carboxysome assembly protein CsoS2, found in Parasynechococcus marenigrum (strain WH8102).